A 573-amino-acid polypeptide reads, in one-letter code: Putative ferric-chelate reductase 1 (573 aa).

A helical transmembrane segment spans residues 4–24; it reads VCKSPQRLLFVLVSCFGLVQS. Residues 15–181 form the Reelin domain; the sequence is LVSCFGLVQS…GTTGTSTTPA (167 aa). Residues 213 to 328 form the DOMON domain; that stretch reads GCYFVAVQAS…NEYYLMIAAG (116 aa). N-linked (GlcNAc...) asparagine glycosylation is found at Asn-286 and Asn-300. A Cytochrome b561 domain is found at 332-532; that stretch reads QGNIQFHTNK…YILQDLNLRA (201 aa). The chain crosses the membrane as a helical span at residues 369–389; the sequence is AHGCLMLISWMATGSIGMIIA. Residues His-370 and His-411 each coordinate heme b. 2 consecutive transmembrane segments (helical) span residues 414–434 and 441–461; these read LMTLSIIATAIAFIIVFVSAG and HPVLGCLVMILSLIQPIVAAF. Heme b contacts are provided by His-441 and His-477. A run of 3 helical transmembrane segments spans residues 479 to 499, 506 to 526, and 550 to 570; these read CNAFAIKCLAVAAIFTGLALF, GWMLKVMGGYLAWEALMYILQ, and ILLFLFIIGNLAFLIALLVGI.

This sequence belongs to the FRRS1 family. The cofactor is heme b.

The protein resides in the membrane. Functionally, putative ferric-chelate reductases reduce Fe(3+) to Fe(2+) before its transport from the endosome to the cytoplasm. The polypeptide is Putative ferric-chelate reductase 1 (frrs1) (Danio rerio (Zebrafish)).